Consider the following 308-residue polypeptide: Probable manganese-dependent inorganic pyrophosphatase (308 aa).

Positions 9, 13, 15, 74, 96, and 148 each coordinate Mn(2+).

It belongs to the PPase class C family. It depends on Mn(2+) as a cofactor.

The protein localises to the cytoplasm. The catalysed reaction is diphosphate + H2O = 2 phosphate + H(+). This Oceanobacillus iheyensis (strain DSM 14371 / CIP 107618 / JCM 11309 / KCTC 3954 / HTE831) protein is Probable manganese-dependent inorganic pyrophosphatase.